The primary structure comprises 119 residues: uncharacterized protein (119 aa).

Residues 80–104 (VFPLVYLFCVVFQFLSLGCYLSIFF) form a helical membrane-spanning segment.

The protein resides in the membrane. This is an uncharacterized protein from Saccharomyces cerevisiae (strain ATCC 204508 / S288c) (Baker's yeast).